Consider the following 607-residue polypeptide: Zinc metalloproteinase-disintegrin-like atrase-A (607 aa).

The first 20 residues, 1–20 (MIQALLVIICLAVFPHQGSS), serve as a signal peptide directing secretion. A propeptide spanning residues 21–196 (IILESGNVND…KTSQLTNTPE (176 aa)) is cleaved from the precursor. The region spanning 205–398 (KYIEFYLVVD…ERPQCILNKP (194 aa)) is the Peptidase M12B domain. Glu208 lines the Ca(2+) pocket. Asn220 and Asn270 each carry an N-linked (GlcNAc...) asparagine glycan. Residue Asp290 participates in Ca(2+) binding. A glycan (N-linked (GlcNAc...) asparagine) is linked at Asn301. Intrachain disulfides connect Cys314/Cys393, Cys353/Cys377, and Cys355/Cys360. Residues His338, His342, and His348 each coordinate Zn(2+). Ca(2+) is bound by residues Cys393, Asn396, Asn411, Phe413, Glu415, Glu418, and Asp421. The region spanning 406–492 (RPVCGNNFVE…ECPTDSLQRN (87 aa)) is the Disintegrin domain. Intrachain disulfides connect Cys409–Cys438, Cys420–Cys433, Cys422–Cys428, Cys432–Cys455, Cys446–Cys452, Cys451–Cys477, Cys464–Cys484, Cys471–Cys503, Cys496–Cys508, Cys515–Cys565, Cys530–Cys573, Cys543–Cys553, Cys560–Cys599, and Cys593–Cys604. The N-linked (GlcNAc...) asparagine glycan is linked to Asn434. Residues 470–472 (DCD) carry the D/ECD-tripeptide motif. Residues Asp472, Leu473, Glu475, Asp487, and Ser488 each coordinate Ca(2+). Residue Asn522 is glycosylated (N-linked (GlcNAc...) asparagine).

It belongs to the venom metalloproteinase (M12B) family. P-III subfamily. P-IIIa sub-subfamily. Monomer. It depends on Zn(2+) as a cofactor. Expressed by the venom gland.

The protein resides in the secreted. In terms of biological role, snake venom zinc metalloproteinase that inhibits platelet aggregation by cleaving platelet glycoprotein Ib alpha (GP1BA) at Glu-298/Asp-299, and abolishes binding of von Willebrand factor (VWF) to GPIBA. The chain is Zinc metalloproteinase-disintegrin-like atrase-A from Naja atra (Chinese cobra).